We begin with the raw amino-acid sequence, 607 residues long: Threonine--tRNA ligase (607 aa).

A catalytic region spans residues 200–502 (DHRKLGRELG…LIEEYAGDFP (303 aa)). Zn(2+) is bound by residues C299, H350, and H479.

It belongs to the class-II aminoacyl-tRNA synthetase family. Homodimer. Zn(2+) is required as a cofactor.

The protein resides in the cytoplasm. It catalyses the reaction tRNA(Thr) + L-threonine + ATP = L-threonyl-tRNA(Thr) + AMP + diphosphate + H(+). Catalyzes the attachment of threonine to tRNA(Thr) in a two-step reaction: L-threonine is first activated by ATP to form Thr-AMP and then transferred to the acceptor end of tRNA(Thr). Also edits incorrectly charged L-seryl-tRNA(Thr). The polypeptide is Threonine--tRNA ligase (Synechococcus sp. (strain ATCC 27144 / PCC 6301 / SAUG 1402/1) (Anacystis nidulans)).